The primary structure comprises 507 residues: Maturase K (507 aa).

The protein belongs to the intron maturase 2 family. MatK subfamily.

The protein resides in the plastid. Its subcellular location is the chloroplast. In terms of biological role, usually encoded in the trnK tRNA gene intron. Probably assists in splicing its own and other chloroplast group II introns. This chain is Maturase K, found in Cryptomeria japonica (Japanese cedar).